We begin with the raw amino-acid sequence, 449 residues long: GPI mannosyltransferase 2 (449 aa).

The Cytoplasmic segment spans residues 1–7 (MTEKVTK). Residues 8–28 (LALASRLIVLLVQLVANGALP) traverse the membrane as a helical segment. The Lumenal portion of the chain corresponds to 29–82 (EHKPDVFRMPVSSDQNASWIDKVIKRCLGGLRHWDGEYFLHIAENLYSYENTLA). A glycan (N-linked (GlcNAc...) asparagine) is linked at Asn-44. Residues 83 to 103 (FYPLYPVVVRHVGQAVEAIGI) traverse the membrane as a helical segment. Topologically, residues 104 to 109 (SLSQES) are cytoplasmic. A helical membrane pass occupies residues 110–130 (ILLVVAVALNFWLFCESANLL). The Lumenal portion of the chain corresponds to 131 to 148 (FQLTQVLFNDLNKSWNAA). An N-linked (GlcNAc...) asparagine glycan is attached at Asn-142. A helical transmembrane segment spans residues 149–169 (LIYCFNPATIFFTAAYSETFF). Residues 170–196 (AYSSLHLMLECSKPTGSFRYLRLGTAL) lie on the Cytoplasmic side of the membrane. Residues 197-217 (AACLLCRSNGLITLGYPLYFF) traverse the membrane as a helical segment. At 218-235 (GRQLLLKNKEPNTCMQLT) the chain is on the lumenal side. The helical transmembrane segment at 236-256 (QMTLTILGAIGILHTYYFYIY) threads the bilayer. At 257–368 (RLYCLPNTRP…GFKELIRDHT (112 aa)) the chain is on the cytoplasmic side. Residues 369–389 (TFPFVLHAAILTLVCTVYVHI) form a helical membrane-spanning segment. The Lumenal portion of the chain corresponds to 390 to 423 (QVSTRLLASATPVFYWFAADHMPKTLAQLKLRSK). Residues 424–444 (AGALFVWCTTYSLVGTVLFSN) traverse the membrane as a helical segment. The Cytoplasmic portion of the chain corresponds to 445-449 (NYPWT).

Belongs to the PIGV family.

It localises to the endoplasmic reticulum membrane. The protein operates within glycolipid biosynthesis; glycosylphosphatidylinositol-anchor biosynthesis. Functionally, mannosyltransferase involved in glycosylphosphatidylinositol-anchor biosynthesis. Transfers the second mannose to the glycosylphosphatidylinositol during GPI precursor assembly. Required for the GPI-mediated endoplasmic reticulum exit and proper targeting to the cell surface of chp. Required for GPI-mediated membrane attachment of chp, qsm and Cont. Essential for microvillar stability in the rhabdomere. The protein is GPI mannosyltransferase 2 of Drosophila melanogaster (Fruit fly).